Consider the following 437-residue polypeptide: MYHDYASKLLADYRSDPPLWESDLPRHNRYSDNILNSRYCGNKNGAEPVYNESTNSPGKAERGLQLSDLRNFSFMLNPQHKNIGYGDAQDLEPYSSIPKNKLFNNFKNHRPAFSTHTENLIRRNVVRTEKKTFPQVASLKSTQKHCLTQPSSLPSLKNPKNISVPSARFSEHTKFFSYEDLPKLKTKGAIKHEQHLGDQMSGQYYNGYIPHKDVYNILCLAHNLPASVEKVIAGRGIPLGNPHVKPNIEQELIKSACAYTGIPIGPLPSKDLQHGREYQEFSANRHMLQVSNILHSVFANHSIKPQILEDIPTLNAQLTSIKPISPFLNKAYQTHYMENIVTLVPRFKSIANYSSPIPNYSKRDSGQAEYFDTSKQTISRHNNYIPKYTGGIGDSKLDTTFPKDFNASSVPLTSAEKDHSLRGDNSACCISSISPSL.

Belongs to the asfivirus p49 structural protein family.

The protein resides in the virion. Its function is as follows. Together with the penton and the other minor capsid proteins (M1249L, p17), forms a complicated network immediately below the outer capsid shell, stabilizing the whole capsid. Plays an essential role in the formation of infectious virus particles. Especially required for the formation of the capsid vertices. During virion assembly, associates with the membrane and probably mediates the docking of the penton complex to the inner membrane, where it recruits the capsomers to form the penton core. The polypeptide is Minor capsid protein p49 (Ornithodoros (relapsing fever ticks)).